A 313-amino-acid chain; its full sequence is Protein-methionine-sulfoxide reductase catalytic subunit MsrP (313 aa).

The segment at residues 1–44 is a signal peptide (tat-type signal); it reads MARWRPDTAEREATPEALYLRRREFLALGAAGAVGLLLPRGARA. Residues Asn76, 79–80, Cys134, Thr169, Asn217, Arg222, and 233–235 each bind Mo-molybdopterin; these read YE and GAK.

It belongs to the MsrP family. In terms of assembly, heterodimer of a catalytic subunit (MsrP) and a heme-binding subunit (MsrQ). Mo-molybdopterin is required as a cofactor. Predicted to be exported by the Tat system. The position of the signal peptide cleavage has not been experimentally proven.

The protein localises to the periplasm. It carries out the reaction L-methionyl-[protein] + a quinone + H2O = L-methionyl-(S)-S-oxide-[protein] + a quinol. The enzyme catalyses L-methionyl-[protein] + a quinone + H2O = L-methionyl-(R)-S-oxide-[protein] + a quinol. Its function is as follows. Part of the MsrPQ system that repairs oxidized periplasmic proteins containing methionine sulfoxide residues (Met-O), using respiratory chain electrons. Thus protects these proteins from oxidative-stress damage caused by reactive species of oxygen and chlorine generated by the host defense mechanisms. MsrPQ is essential for the maintenance of envelope integrity under bleach stress, rescuing a wide series of structurally unrelated periplasmic proteins from methionine oxidation. The catalytic subunit MsrP is non-stereospecific, being able to reduce both (R-) and (S-) diastereoisomers of methionine sulfoxide. The polypeptide is Protein-methionine-sulfoxide reductase catalytic subunit MsrP (Anaeromyxobacter dehalogenans (strain 2CP-C)).